A 569-amino-acid polypeptide reads, in one-letter code: MGALFMVKSKAIMIGAGLSNMAAAVYLIQDGHWDGKDITFYGVDMHGANDGGATTDFTNEYWNKNHPMANTTGYVARGGRMLNYRTYVDLMDLLDRIPSVTEPGMTAAEDTRDFDAKHRTYDIARLMQGGKGIINAGKLGFNNKDRTLLTKLIMMPDSEETKLDNVSIAEYFKDDPHMFQTNFWYMWETTFAFRTQSSAQELRRYMHQMIYEFTQIEHLVGVNRTRYNQFESMILPLIKYLQGQGVTFIDNKIVKDWQFKDTPMQDEITVTGLVIEDAQTGETEEVEVDEDTAVIFTNGSITDSATMGDYNTPAPENMDYGVSASLWKKATERFYNLGTPDKFFNDRNASEWVSFTLTTKNHLFLNEIVRITTQEPGNALNSFLSTTPITPLNQKDVNMSIVVHHQPHFTTQQPNETVLWGYFLYPRRQGEFVNKPYIKMTGKEMAQELIGQLSKVDPGPGNIKDKEKENLDSIVNNIPVYMPYASALFNNRAKSDRPEVLPKHSTNLAFTGEFAEQPYQMIFTEQSAVRSGEIAAYHFAGVPMDNLVKTPRYDKDPKTLLKATKKMFD.

Residue Y87 participates in FAD binding. The active-site Proton donor is the Y205. FAD is bound by residues V254, S300, and T524.

It belongs to the oleate hydratase family. The cofactor is FAD.

It localises to the cell membrane. The protein resides in the cytoplasm. It catalyses the reaction (9Z,12Z)-octadecadienoate + H2O = (10S)-hydroxy-(12Z)-octadecenoate. It carries out the reaction (10E,12Z)-octadecadienoate + H2O = (10S)-hydroxy-(12Z)-octadecenoate. The catalysed reaction is (9Z)-octadecenoate + H2O = 10-hydroxyoctadecanoate. The enzyme catalyses (10E)-octadecenoate + H2O = 10-hydroxyoctadecanoate. It catalyses the reaction (9E,11E)-octadecadienoate + H2O = 10-hydroxy-(11E)-octadecenoate. It carries out the reaction (9Z,11E)-octadecadienoate + H2O = 10-hydroxy-(11E)-octadecenoate. The catalysed reaction is (9Z)-hexadecenoate + H2O = 10-hydroxyhexadecanoate. The enzyme catalyses (9Z,12Z,15Z)-octadecatrienoate + H2O = (10S)-hydroxy-(12Z,15Z)-octadecadienoate. It catalyses the reaction (6Z,9Z,12Z)-octadecatrienoate + H2O = (10S)-hydroxy-(6Z,12Z)-octadecadienoate. It carries out the reaction (6Z,9Z,12Z,15Z)-octadecatetraenoate + H2O = (10S)-hydroxy-(6Z,12Z,15Z)-octadecatrienoate. It participates in lipid metabolism; fatty acid metabolism. With respect to regulation, the addition of NADH or NADPH highly increases catalytic activity, likely by reducing the cofactor FAD to FADH2. The hydration and dehydration reactions are strongly inhibited by Ag(+), Fe(2+), Cu(2+), Zn(2+), Hg(2+), and Fe(3+). Is involved in a saturation metabolic pathway of polyunsaturated fatty acids, that detoxifies unsaturated fatty acids and generates hydroxy fatty acids, oxo fatty acids, conjugated fatty acids such as conjugated linoleic acids (CLAs), and partially saturated trans-fatty acids as intermediates. CLA-HY catalyzes the hydration and dehydration steps in the production of 10-hydroxy-cis-12-octadecenoate, trans-10,cis-12-CLA, cis-9,trans-11-CLA, trans-9,trans-11-CLA, oleate and trans-10-octadecenoate during linoleate metabolism. Is also able to hydrate palmitoleic acid (cis-9-hexadecenoic acid), oleic acid, alpha-linolenic acid, gamma-linolenic acid, and stearidonic acid into the corresponding 10-hydroxy fatty acids, and dehydrate 10-hydroxy-cis-12,cis-15-octadecadienoic acid, 10-hydroxy-cis-6,cis-12-octadecadienoic acid, and 10-hydroxyoctadecanoic acid into the corresponding fatty acids with cis double bonds at the Delta9 position. As part of the gut microbiome, this enzyme modifies host fatty acid composition and is expected to improve human health by altering lipid metabolism related to the onset of metabolic syndrome. Shows regioselectivity for Delta9 double bond hydration, generating C10 hydroxy groups in the (S)-configuration with high enantioselectivity, when another double bond is in position 12. Is not able to hydrate fatty acids with a trans carbon-carbon double bond at Delta9 position (elaidic acid, trans-9-octadecenoic acid), fatty acid esters (methyl linoleate, monolinolein, dilinolein, and trilinolein), and conjugated fatty acids (conjugated linoleic acids), as well as fatty acids with other chain lengths, such as myristoleic acid (cis-9-tetradecenoic acid), arachidonic acid (cis-5,cis-8,cis-11,cis-14-eicosatetraenoic acid), EPA (cis-5,cis-8,cis-11,cis-14,cis-17-eicosapentaenoic acid), DHA (cis-4,cis-7,cis-10,cis-13,cis-16,cis-19-docosahexaenoic acid) and fatty acids with a cis carbon-carbon double bond at Delta11 position, such as cis-vaccenic acid and cis-11-octadecenoic acid, or fatty alcohols, such as linoleyl alcohol. Is not able to dehydrate 12-hydroxy, 3-hydroxy, and 9-hydroxy fatty acids. The polypeptide is Linoleate hydratase (Lactiplantibacillus plantarum (Lactobacillus plantarum)).